Reading from the N-terminus, the 348-residue chain is Dihydroorotase (348 aa).

Residues H17 and H19 each coordinate Zn(2+). Substrate is bound by residues 19 to 21 (HLR) and N45. Positions 103, 140, and 178 each coordinate Zn(2+). The residue at position 103 (K103) is an N6-carboxylysine. A substrate-binding site is contributed by H140. L223 contributes to the substrate binding site. D251 contacts Zn(2+). D251 is a catalytic residue. Residues H255 and A267 each contribute to the substrate site.

This sequence belongs to the metallo-dependent hydrolases superfamily. DHOase family. Class II DHOase subfamily. Homodimer. Zn(2+) serves as cofactor.

The catalysed reaction is (S)-dihydroorotate + H2O = N-carbamoyl-L-aspartate + H(+). Its pathway is pyrimidine metabolism; UMP biosynthesis via de novo pathway; (S)-dihydroorotate from bicarbonate: step 3/3. Catalyzes the reversible cyclization of carbamoyl aspartate to dihydroorotate. This Klebsiella pneumoniae (strain 342) protein is Dihydroorotase.